Consider the following 185-residue polypeptide: Capsid protein (185 aa).

Residues 136-185 (NAPILSTLPETTVVRRRDRGRSPRRRTPSPRRRRSQSPRRRRSQSRESQC) are disordered. The span at 149 to 178 (VRRRDRGRSPRRRTPSPRRRRSQSPRRRRS) shows a compositional bias: basic residues. Residues serine 157, serine 164, and serine 172 each carry the phosphoserine; by host modification. The 1; half-length repeat unit spans residues 157 to 163 (SPRRRTP). A 3 X 8 AA repeats of S-P-R-R-R-[PR]-S-Q region spans residues 157–179 (SPRRRTPSPRRRRSQSPRRRRSQ). A Bipartite nuclear localization signal motif is present at residues 160-177 (RRTPSPRRRRSQSPRRRR). 2 repeat units span residues 164-171 (SPRRRRSQ) and 172-179 (SPRRRRSQ). The RNA binding stretch occupies residues 179-185 (QSRESQC).

The protein belongs to the orthohepadnavirus core antigen family. As to quaternary structure, homodimerizes, then multimerizes. Interacts with cytosol exposed regions of viral L glycoprotein present in the reticulum-to-Golgi compartment. Interacts with human FLNB. Phosphorylated form interacts with host importin alpha; this interaction depends on the exposure of the NLS, which itself depends upon genome maturation and/or phosphorylation of the capsid protein. Interacts with host NUP153. Post-translationally, phosphorylated by host SRPK1, SRPK2, and maybe protein kinase C or GAPDH. Phosphorylation is critical for pregenomic RNA packaging. Protein kinase C phosphorylation is stimulated by HBx protein and may play a role in transport of the viral genome to the nucleus at the late step during the viral replication cycle.

The protein localises to the virion. It localises to the host cytoplasm. Functionally, self assembles to form an icosahedral capsid. Most capsids appear to be large particles with an icosahedral symmetry of T=4 and consist of 240 copies of capsid protein, though a fraction forms smaller T=3 particles consisting of 180 capsid proteins. Entering capsids are transported along microtubules to the nucleus. Phosphorylation of the capsid is thought to induce exposure of nuclear localization signal in the C-terminal portion of the capsid protein that allows binding to the nuclear pore complex via the importin (karyopherin-) alpha and beta. Capsids are imported in intact form through the nuclear pore into the nuclear basket, where it probably binds NUP153. Only capsids that contain the mature viral genome can release the viral DNA and capsid protein into the nucleoplasm. Immature capsids get stuck in the basket. Capsids encapsulate the pre-genomic RNA and the P protein. Pre-genomic RNA is reverse-transcribed into DNA while the capsid is still in the cytoplasm. The capsid can then either be directed to the nucleus, providing more genomes for transcription, or bud through the endoplasmic reticulum to provide new virions. The polypeptide is Capsid protein (Homo sapiens (Human)).